Reading from the N-terminus, the 311-residue chain is Chemotaxis protein CheV3 (311 aa).

Positions 13 to 164 constitute a CheW-like domain; that stretch reads EIELVDFRIY…LESILDDLKL (152 aa). A Response regulatory domain is found at 182 to 308; that stretch reads EVLFLDDSKT…FTEEISKILD (127 aa). Position 241 is a 4-aspartylphosphate (Asp241).

Plays a role in chemotaxis signal transduction system in order to colonize the host stomach. May act as a phosphate sink to control the flow of phosphate to CheAY. The sequence is that of Chemotaxis protein CheV3 from Helicobacter pylori (strain ATCC 700392 / 26695) (Campylobacter pylori).